A 3616-amino-acid polypeptide reads, in one-letter code: Replicase polyprotein 1ab (3616 aa).

Residues cysteine 8–cysteine 28 form a C4-type; atypical zinc finger. One can recognise a Peptidase C31 domain in the interval glutamate 69–arginine 181. Active-site for Nsp1-alpha papain-like cysteine proteinase activity residues include cysteine 76 and histidine 147. One can recognise a Peptidase C32 domain in the interval asparagine 262 to glycine 381. Active-site for Nsp1-beta papain-like cysteine proteinase activity residues include cysteine 269 and histidine 340. Residues glycine 381 to phenylalanine 486 enclose the Peptidase C33 domain. Active-site for Nsp2 cysteine proteinase activity residues include cysteine 390 and histidine 456. Disordered regions lie at residues serine 672–proline 706 and proline 883–arginine 912. A compositionally biased stretch (basic residues) spans lysine 676–threonine 690. The span at aspartate 903–arginine 912 shows a compositional bias: polar residues. The next 9 membrane-spanning stretches (helical) occupy residues tryptophan 942–leucine 962, leucine 977–leucine 997, leucine 1010–glutamate 1030, histidine 1060–proline 1080, phenylalanine 1085–leucine 1105, valine 1289–leucine 1309, alanine 1364–valine 1384, valine 1386–phenylalanine 1406, and valine 1425–isoleucine 1445. An HD1 region spans residues cysteine 981–leucine 1105. Residues valine 1289–tryptophan 1448 form an HD2 region. One can recognise a Peptidase S32 domain in the interval glycine 1513–glutamate 1714. Residues histidine 1551, aspartate 1576, and serine 1628 each act as charge relay system; for 3C-like serine proteinase activity in the active site. 4 consecutive transmembrane segments (helical) span residues glycine 1715–valine 1735, phenylalanine 1737–alanine 1757, phenylalanine 1761–leucine 1781, and serine 1832–phenylalanine 1852. The segment at phenylalanine 1737–phenylalanine 1852 is HD3. The region spanning serine 2194–glycine 2352 is the NiRAN domain. The RdRp catalytic domain occupies glycine 2590–tyrosine 2724. Residues lysine 2844–leucine 2907 enclose the AV ZBD domain. Zn(2+)-binding residues include cysteine 2850, cysteine 2853, cysteine 2863, cysteine 2868, histidine 2871, histidine 2873, histidine 2875, histidine 2877, cysteine 2884, histidine 2886, cysteine 2893, and cysteine 2896. One can recognise a (+)RNA virus helicase ATP-binding domain in the interval glutamine 2964–leucine 3116. Residue glycine 2992–threonine 2999 participates in ATP binding. One can recognise a (+)RNA virus helicase C-terminal domain in the interval isoleucine 3117–glycine 3248. One can recognise an AV-Nsp11N/CoV-Nsp15M domain in the interval glutamate 3272 to valine 3368. The NendoU domain occupies leucine 3370–phenylalanine 3492.

It belongs to the arteriviridae polyprotein family. In terms of processing, specific enzymatic cleavages in vivo by its own proteases yield mature proteins. There are two alternative pathways for processing. Either nsp4-5 is cleaved, which represents the major pathway or the nsp5-6 and nsp6-7 are processed, which represents the minor pathway. The major pathway occurs when nsp2 acts as a cofactor for nsp4.

The protein localises to the host membrane. The protein resides in the host cytoplasm. Its subcellular location is the host perinuclear region. The enzyme catalyses RNA(n) + a ribonucleoside 5'-triphosphate = RNA(n+1) + diphosphate. It catalyses the reaction ATP + H2O = ADP + phosphate + H(+). It carries out the reaction uridylyl-uridylyl-ribonucleotide-RNA = a 3'-end uridylyl-2',3'-cyclophospho-uridine-RNA + a 5'-end dephospho-ribonucleoside-RNA. In terms of biological role, the replicase polyprotein 1ab is a multifunctional protein: it contains the activities necessary for the transcription of negative stranded RNA, leader RNA, subgenomic mRNAs and progeny virion RNA as well as proteinases responsible for the cleavage of the polyprotein into functional products. Its function is as follows. The Nsp1 chain is essential for viral subgenomic mRNA synthesis. Functionally, the 3C-like serine proteinase chain is responsible for the majority of cleavages as it cleaves the C-terminus of the polyprotein. The helicase chain, which contains a zinc finger structure, displays RNA and DNA duplex-unwinding activities with 5' to 3' polarity. In terms of biological role, plays a role in viral transcription/replication and prevents the simultaneous activation of host cell dsRNA sensors, such as MDA5/IFIH1, OAS, and PKR. Acts by degrading the 5'-polyuridines generated during replication of the poly(A) region of viral genomic and subgenomic RNAs. Catalyzes a two-step reaction in which a 2'3'-cyclic phosphate (2'3'-cP) is first generated by 2'-O transesterification, which is then hydrolyzed to a 3'-phosphate (3'-P). If not degraded, poly(U) RNA would hybridize with poly(A) RNA tails and activate host dsRNA sensors. The chain is Replicase polyprotein 1ab (rep) from Mus musculus domesticus (western European house mouse).